A 418-amino-acid chain; its full sequence is Gamma-glutamyl phosphate reductase (418 aa).

The protein belongs to the gamma-glutamyl phosphate reductase family.

Its subcellular location is the cytoplasm. The enzyme catalyses L-glutamate 5-semialdehyde + phosphate + NADP(+) = L-glutamyl 5-phosphate + NADPH + H(+). It functions in the pathway amino-acid biosynthesis; L-proline biosynthesis; L-glutamate 5-semialdehyde from L-glutamate: step 2/2. Catalyzes the NADPH-dependent reduction of L-glutamate 5-phosphate into L-glutamate 5-semialdehyde and phosphate. The product spontaneously undergoes cyclization to form 1-pyrroline-5-carboxylate. The polypeptide is Gamma-glutamyl phosphate reductase (Histophilus somni (strain 129Pt) (Haemophilus somnus)).